We begin with the raw amino-acid sequence, 421 residues long: BEN domain-containing protein 5 (421 aa).

Lysine 133 carries the N6-acetyllysine modification. Positions 180-243 form a coiled coil; that stretch reads RALYEELLRN…LNRRLQDVLL (64 aa). A Glycyl lysine isopeptide (Lys-Gly) (interchain with G-Cter in SUMO2) cross-link involves residue lysine 258. The 107-residue stretch at 302–408 folds into the BEN domain; that stretch reads GSGIWVDEEK…EKIMDINKSC (107 aa).

Acts as a transcriptional repressor. This Homo sapiens (Human) protein is BEN domain-containing protein 5 (BEND5).